A 340-amino-acid chain; its full sequence is MKQLKKQHEEILKAVVGAYLTQKNEISSALLVKNYGIKFSPAKVRYLMTALEDEGLLVKETKSSGRKPTNKGLEYYAKFLSNAFDLKLINNLEKIFLNRKDNIYNTIEEVTKELASLTGATFVTKFKDPNLILKSINLFEVSESLATIILVVSNGEVLSRKIDIPENKAIKISDLKIAMNIFQDNLIDCKLIDLEKRILLLKDILAEKIIQYEDVIESYVKSILGIGIKSQIYGRENIILSRKIAREDVNEILNILEKNSIWDALEKNSNDFEEIRISINSKGAFFSKRIDENNNLTEISVVAPNESDSNSIKSGIMLLTKIITNNINEKEKDKNERKHS.

This sequence belongs to the HrcA family.

Functionally, negative regulator of class I heat shock genes (grpE-dnaK-dnaJ and groELS operons). Prevents heat-shock induction of these operons. This is Heat-inducible transcription repressor HrcA from Mycoplasmopsis synoviae (strain 53) (Mycoplasma synoviae).